The sequence spans 262 residues: Inner membrane protein YcfZ (262 aa).

Residues 1–4 are Cytoplasmic-facing; it reads MKKF. A helical transmembrane segment spans residues 5 to 27; sequence IILLSLLILLPLTAASKPLIPIM. At 28–182 the chain is on the periplasmic side; that stretch reads KTLFTDVTGT…HENAPPGSTN (155 aa). Residues 183–202 traverse the membrane as a helical segment; it reads TLGFIAWAATFILFSRIFYY. Over 203 to 206 the chain is Cytoplasmic; it reads TTRF. A helical transmembrane segment spans residues 207–229; it reads IYALKFAVAMTIANMGYQALCLY. Residues 230-238 lie on the Periplasmic side of the membrane; sequence IDNSFAITR. Residues 239–258 traverse the membrane as a helical segment; sequence ISPLWAGLIGVCTFIAALLL. Residues 259–262 lie on the Cytoplasmic side of the membrane; that stretch reads TSKR.

Its subcellular location is the cell inner membrane. This chain is Inner membrane protein YcfZ (ycfZ), found in Escherichia coli (strain K12).